Consider the following 251-residue polypeptide: Triosephosphate isomerase (251 aa).

12–14 provides a ligand contact to substrate; the sequence is NWK. Histidine 99 serves as the catalytic Electrophile. Glutamate 169 (proton acceptor) is an active-site residue. Residues glycine 175, serine 214, and 235–236 contribute to the substrate site; that span reads GG.

The protein belongs to the triosephosphate isomerase family. Homodimer.

It is found in the cytoplasm. The enzyme catalyses D-glyceraldehyde 3-phosphate = dihydroxyacetone phosphate. It participates in carbohydrate biosynthesis; gluconeogenesis. The protein operates within carbohydrate degradation; glycolysis; D-glyceraldehyde 3-phosphate from glycerone phosphate: step 1/1. Involved in the gluconeogenesis. Catalyzes stereospecifically the conversion of dihydroxyacetone phosphate (DHAP) to D-glyceraldehyde-3-phosphate (G3P). This chain is Triosephosphate isomerase, found in Bradyrhizobium sp. (strain ORS 278).